Consider the following 272-residue polypeptide: Cytochrome c1 (272 aa).

Residues 1-24 (MTTIVKRALVAAGMVLAIGGAAQA) form the signal peptide. Heme c contacts are provided by Cys61, Cys64, His65, and Met200. A helical transmembrane segment spans residues 244 to 261 (LGLKVLLFLGVLTAMLLA).

In terms of assembly, the main subunits of complex b-c1 are: cytochrome b, cytochrome c1 and the Rieske protein. Post-translationally, binds 1 heme c group covalently per subunit.

Its subcellular location is the cell membrane. Its function is as follows. Component of the ubiquinol-cytochrome c reductase complex (complex III or cytochrome b-c1 complex), which is a respiratory chain that generates an electrochemical potential coupled to ATP synthesis. This is Cytochrome c1 (petC) from Rhodospirillum rubrum.